The sequence spans 375 residues: Carbamoyl phosphate synthase small chain (375 aa).

A CPSase region spans residues 1–180; it reads MSKALLVLED…DAYVVEPKGK (180 aa). Residues serine 46, glycine 232, and glycine 234 each contribute to the L-glutamine site. The Glutamine amidotransferase type-1 domain maps to 184-375; that stretch reads TVAALDLGIK…SFVELMAAQR (192 aa). Catalysis depends on cysteine 260, which acts as the Nucleophile. L-glutamine is bound by residues phenylalanine 261, glutamine 264, asparagine 302, glycine 304, and phenylalanine 305. Active-site residues include histidine 350 and glutamate 352.

The protein belongs to the CarA family. As to quaternary structure, composed of two chains; the small (or glutamine) chain promotes the hydrolysis of glutamine to ammonia, which is used by the large (or ammonia) chain to synthesize carbamoyl phosphate. Tetramer of heterodimers (alpha,beta)4.

It carries out the reaction hydrogencarbonate + L-glutamine + 2 ATP + H2O = carbamoyl phosphate + L-glutamate + 2 ADP + phosphate + 2 H(+). The enzyme catalyses L-glutamine + H2O = L-glutamate + NH4(+). Its pathway is amino-acid biosynthesis; L-arginine biosynthesis; carbamoyl phosphate from bicarbonate: step 1/1. The protein operates within pyrimidine metabolism; UMP biosynthesis via de novo pathway; (S)-dihydroorotate from bicarbonate: step 1/3. Its function is as follows. Small subunit of the glutamine-dependent carbamoyl phosphate synthetase (CPSase). CPSase catalyzes the formation of carbamoyl phosphate from the ammonia moiety of glutamine, carbonate, and phosphate donated by ATP, constituting the first step of 2 biosynthetic pathways, one leading to arginine and/or urea and the other to pyrimidine nucleotides. The small subunit (glutamine amidotransferase) binds and cleaves glutamine to supply the large subunit with the substrate ammonia. The protein is Carbamoyl phosphate synthase small chain of Mycobacterium leprae (strain TN).